A 393-amino-acid chain; its full sequence is NAD(P)H-quinone oxidoreductase subunit H, chloroplastic (393 aa).

This sequence belongs to the complex I 49 kDa subunit family. In terms of assembly, NDH is composed of at least 16 different subunits, 5 of which are encoded in the nucleus.

It localises to the plastid. It is found in the chloroplast thylakoid membrane. It catalyses the reaction a plastoquinone + NADH + (n+1) H(+)(in) = a plastoquinol + NAD(+) + n H(+)(out). The enzyme catalyses a plastoquinone + NADPH + (n+1) H(+)(in) = a plastoquinol + NADP(+) + n H(+)(out). NDH shuttles electrons from NAD(P)H:plastoquinone, via FMN and iron-sulfur (Fe-S) centers, to quinones in the photosynthetic chain and possibly in a chloroplast respiratory chain. The immediate electron acceptor for the enzyme in this species is believed to be plastoquinone. Couples the redox reaction to proton translocation, and thus conserves the redox energy in a proton gradient. The polypeptide is NAD(P)H-quinone oxidoreductase subunit H, chloroplastic (Crucihimalaya wallichii (Rock-cress)).